The sequence spans 107 residues: Ornithine carbamoyltransferase, catabolic (107 aa).

Carbamoyl phosphate-binding positions include 57 to 61 (STRTR) and Gln-84.

This sequence belongs to the aspartate/ornithine carbamoyltransferase superfamily. OTCase family.

The protein localises to the cytoplasm. The catalysed reaction is carbamoyl phosphate + L-ornithine = L-citrulline + phosphate + H(+). It participates in amino-acid degradation; L-arginine degradation via ADI pathway; carbamoyl phosphate from L-arginine: step 2/2. This chain is Ornithine carbamoyltransferase, catabolic (arcB), found in Streptococcus pyogenes.